The following is a 124-amino-acid chain: Succinate dehydrogenase cytochrome b556 subunit (124 aa).

Over 1–29 (MTKIKQEIYNKRPTSPHLTIYKPQISSTL) the chain is Cytoplasmic. Residues 30 to 55 (SILHRMTGVALFFVVSILVWWLILSK) traverse the membrane as a helical segment. Over 56 to 67 (YDNNYLQLARCC) the chain is Periplasmic. A helical transmembrane segment spans residues 68–88 (IIKICLVAFSYAWCYHLCNGI). His-83 provides a ligand contact to heme. The Cytoplasmic segment spans residues 89-103 (RHLFWDIGYGFSIRA). Residues 104–124 (VNITGWCVVVCSILLTMLLWV) form a helical membrane-spanning segment.

Belongs to the cytochrome b560 family. As to quaternary structure, part of an enzyme complex containing four subunits: a flavoprotein, an iron-sulfur protein, plus two membrane-anchoring proteins, SdhC and SdhD. The complex can form homotrimers. The cofactor is heme.

The protein resides in the cell inner membrane. It participates in carbohydrate metabolism; tricarboxylic acid cycle. Its function is as follows. Membrane-anchoring subunit of succinate dehydrogenase (SDH). The sequence is that of Succinate dehydrogenase cytochrome b556 subunit (sdhC) from Rickettsia typhi (strain ATCC VR-144 / Wilmington).